A 29-amino-acid chain; its full sequence is Dermaseptin-J5 (29 aa).

The residue at position 29 (valine 29) is a Valine amide.

As to expression, expressed by the skin glands.

The protein resides in the secreted. Its function is as follows. Has antimicrobial activity. The protein is Dermaseptin-J5 of Phasmahyla jandaia (Jandaia leaf frog).